The primary structure comprises 570 residues: Hemagglutinin-neuraminidase (570 aa).

Residues 1–26 (MNRAVCQVALENDEREAKNTWRLVFR) are Intravirion-facing. Residues 27–48 (IAILLLTVMTLAISAAALAYSM) traverse the membrane as a helical segment. The Virion surface portion of the chain corresponds to 49 to 570 (EASTPGDLVS…LVEILKDDGV (522 aa)). An N-linked (GlcNAc...) asparagine; by host glycan is attached at Asn-119. The interval 124 to 152 (GAPVHDPDYIGGIGKELIVDDTSDVTSFY) is important for interaction with fusion/F protein. Disulfide bonds link Cys-172–Cys-195, Cys-185–Cys-246, and Cys-237–Cys-250. An involved in neuraminidase activity region spans residues 233-238 (NRKSCS). N-linked (GlcNAc...) asparagine; by host glycosylation is found at Asn-340 and Asn-432. Intrachain disulfides connect Cys-343-Cys-460 and Cys-454-Cys-464. N-linked (GlcNAc...) asparagine; by host glycans are attached at residues Asn-480, Asn-507, and Asn-537. The cysteines at positions 530 and 541 are disulfide-linked.

Belongs to the paramyxoviruses hemagglutinin-neuraminidase family. In terms of assembly, homotetramer; composed of disulfide-linked homodimers. Interacts with F protein trimer. Interacts with host CG-1B; this interaction inhibits viral adsorption and replication rather than internalization.

It is found in the virion membrane. Its subcellular location is the host cell membrane. The catalysed reaction is Hydrolysis of alpha-(2-&gt;3)-, alpha-(2-&gt;6)-, alpha-(2-&gt;8)- glycosidic linkages of terminal sialic acid residues in oligosaccharides, glycoproteins, glycolipids, colominic acid and synthetic substrates.. In terms of biological role, mediates the viral entry into the host cell together with fusion/F protein. Attaches the virus to sialic acid-containing cell receptors and thereby initiates infection. Binding of HN protein to the receptor induces a conformational change that allows the F protein to trigger virion/cell membranes fusion. Its function is as follows. Neuraminidase activity ensures the efficient spread of the virus by dissociating the mature virions from the neuraminic acid containing glycoproteins. The polypeptide is Hemagglutinin-neuraminidase (HN) (Gallus gallus (Chicken)).